A 472-amino-acid chain; its full sequence is Ras-GEF domain-containing family member 1B (472 aa).

The N-terminal Ras-GEF domain maps to 34–164 (HDNNLLSGSL…MMQCLIRKLA (131 aa)). The 249-residue stretch at 204–452 (DPYTLAQQLT…YLASYESEGP (249 aa)) folds into the Ras-GEF domain.

In terms of assembly, interacts with CCDC124 during cytokinesis. Interacts with Ras family proteins.

It localises to the early endosome. It is found in the late endosome. The protein resides in the midbody. Guanine nucleotide exchange factor (GEF) with specificity for RAP2A, it doesn't seems to activate other Ras family proteins (in vitro). The protein is Ras-GEF domain-containing family member 1B (RASGEF1B) of Pongo abelii (Sumatran orangutan).